Here is a 177-residue protein sequence, read N- to C-terminus: Ribosome maturation factor RimM (177 aa).

One can recognise a PRC barrel domain in the interval 98 to 177; sequence GEEFYWRELY…RIEVDWDPGF (80 aa).

Belongs to the RimM family. In terms of assembly, binds ribosomal protein uS19.

The protein localises to the cytoplasm. An accessory protein needed during the final step in the assembly of 30S ribosomal subunit, possibly for assembly of the head region. Essential for efficient processing of 16S rRNA. May be needed both before and after RbfA during the maturation of 16S rRNA. It has affinity for free ribosomal 30S subunits but not for 70S ribosomes. In Photobacterium profundum (strain SS9), this protein is Ribosome maturation factor RimM.